The sequence spans 403 residues: Phosphoglycerate kinase (403 aa).

Residues 21 to 23 (DFN), R36, 59 to 62 (HLGR), R119, and R154 contribute to the substrate site. ATP contacts are provided by residues K207, G299, E330, and 357 to 360 (GGDA).

It belongs to the phosphoglycerate kinase family. Monomer.

The protein resides in the cytoplasm. It carries out the reaction (2R)-3-phosphoglycerate + ATP = (2R)-3-phospho-glyceroyl phosphate + ADP. It participates in carbohydrate degradation; glycolysis; pyruvate from D-glyceraldehyde 3-phosphate: step 2/5. In Chlamydia trachomatis serovar L2 (strain ATCC VR-902B / DSM 19102 / 434/Bu), this protein is Phosphoglycerate kinase.